The following is a 918-amino-acid chain: Glutamate receptor ionotropic, kainate 1 (918 aa).

The signal sequence occupies residues 1 to 30 (MEHGTLLAQPGLWTRDTSWALLYFLCYILP). The Extracellular segment spans residues 31–576 (QTAPQVLRIG…VFSFLNPLSP (546 aa)). Residues asparagine 68, asparagine 74, asparagine 276, asparagine 379, asparagine 428, asparagine 439, and asparagine 446 are each glycosylated (N-linked (GlcNAc...) asparagine). L-glutamate is bound by residues proline 531, threonine 533, and arginine 538. Residue asparagine 561 is glycosylated (N-linked (GlcNAc...) asparagine). A helical transmembrane segment spans residues 577 to 597 (DIWMYVLLACLGVSCVLFVIA). The Cytoplasmic segment spans residues 598–653 (RFTPYEWYNPHPCNPDSDVVENNFTLLNSFWFGVGALMQQGSELMPKALSTRIVGG). Residues 654–674 (IWWFFTLIIISSYTANLAAFL) traverse the membrane as a helical segment. Residues 675 to 834 (TVERMESPID…KEASALGVEN (160 aa)) are Extracellular-facing. Residues serine 704 and threonine 705 each contribute to the L-glutamate site. The residue at position 725 (serine 725) is a Phosphoserine; by PKC. Position 753 (glutamate 753) interacts with L-glutamate. Position 761 is a phosphothreonine; by PKC (threonine 761). A disulfide bridge connects residues cysteine 765 and cysteine 819. Residue asparagine 766 is glycosylated (N-linked (GlcNAc...) asparagine). Residues 835-855 (IGGIFIVLAAGLVLSVFVAIG) form a helical membrane-spanning segment. The Cytoplasmic segment spans residues 856–918 (EFIYKSRKNN…IRKQSSVHTV (63 aa)).

The protein belongs to the glutamate-gated ion channel (TC 1.A.10.1) family. GRIK1 subfamily. Homotetramer or heterotetramer of pore-forming glutamate receptor subunits. Tetramers may be formed by the dimerization of dimers. Can form functional heteromeric receptors with GRIK5. Can form functional heteromeric receptors with GRIK4. Interacts with KLHL17.

The protein resides in the cell membrane. The protein localises to the postsynaptic cell membrane. The enzyme catalyses Ca(2+)(in) = Ca(2+)(out). In terms of biological role, ionotropic glutamate receptor that functions as a cation-permeable ligand-gated ion channel, gated by L-glutamate and the glutamatergic agonist kainic acid. L-glutamate acts as an excitatory neurotransmitter at many synapses in the central nervous system. Binding of the excitatory neurotransmitter L-glutamate induces a conformation change, leading to the opening of the cation channel, and thereby converts the chemical signal to an electrical impulse. The receptor then desensitizes rapidly and enters a transient inactive state, characterized by the presence of bound agonist. Ionotropic glutamate receptor that functions as a cation-permeable ligand-gated ion channel, gated by L-glutamate and the glutamatergic agonist kainic acid. This is Glutamate receptor ionotropic, kainate 1 (GRIK1) from Homo sapiens (Human).